A 359-amino-acid chain; its full sequence is MKTLTVHTPSHSYPIFIGNGLLPQAGSLLKPHLGKRAAIITNETVAPLYLGTLQTALDAAGVSHFSIILPDGEAHKNWQTLNLIFDGLMQNRAERKTTLIALGGGVIGDMTGFAAATYQRGAPFVQIPTTLLSQVDSSVGGKTAINHPLGKNMIGAFYQPQAVLADLDTLHTLPARELSAGMAEVIKYGTLGDISFFEWLEQHMPELMALERAPLIQAVYRCCQMKADIVAQDETEQGIRAWLNLGHTFGHAIETEMGYGTWLHGEAVAAGCVLAARLSEQLGKISAADTARLAALLEAAGLPSAPPVFAFEKWLEHMSHDKKVSGGIMRFIGLNRLGEANITEITDTDILRRTLQPYL.

NAD(+)-binding positions include 71 to 76 (DGEAHK), 105 to 109 (GVIGD), 129 to 130 (TT), Lys142, Lys151, and 169 to 172 (TLHT). Residues Glu184, His247, and His264 each contribute to the Zn(2+) site.

The protein belongs to the sugar phosphate cyclases superfamily. Dehydroquinate synthase family. The cofactor is NAD(+). Co(2+) serves as cofactor. It depends on Zn(2+) as a cofactor.

The protein localises to the cytoplasm. It catalyses the reaction 7-phospho-2-dehydro-3-deoxy-D-arabino-heptonate = 3-dehydroquinate + phosphate. The protein operates within metabolic intermediate biosynthesis; chorismate biosynthesis; chorismate from D-erythrose 4-phosphate and phosphoenolpyruvate: step 2/7. In terms of biological role, catalyzes the conversion of 3-deoxy-D-arabino-heptulosonate 7-phosphate (DAHP) to dehydroquinate (DHQ). The polypeptide is 3-dehydroquinate synthase (Neisseria meningitidis serogroup A / serotype 4A (strain DSM 15465 / Z2491)).